We begin with the raw amino-acid sequence, 1695 residues long: Sialoadhesin (1695 aa).

Positions 1–19 (MCVLFSLLLLASVFSLGQT) are cleaved as a signal peptide. In terms of domain architecture, Ig-like V-type spans 20 to 136 (TWGVSSPKNV…DVKGTTVTVT (117 aa)). Over 20–1639 (TWGVSSPKNV…ALHQLQLFQR (1620 aa)) the chain is Extracellular. Disulfide bonds link C36–C166, C41–C98, C160–C218, and C263–C306. N-acetylneuraminate-binding positions include Y63, R116, and 122 to 126 (SNRWL). Ig-like C2-type domains lie at 153-235 (GMER…YLQV), 239-321 (PKGV…SPLS), 326-406 (MAEV…SPLS), 416-508 (PDLT…LDFY), 509-594 (ANVA…TVLT), 602-701 (PTFT…ASFN), 704-781 (ATVL…AQLS), 795-890 (PKLS…FQVR), 894-973 (VQVS…APVS), 980-1079 (PRHV…ADFD), 1081-1161 (QAVR…RPVT), 1172-1264 (RLTY…MNPS), 1245-1337 (KANT…ASLQ), 1342-1439 (PRDA…RLLT), 1442-1520 (DIRV…ATTS), and 1534-1627 (PTLI…AYFG). N159 is a glycosylation site (N-linked (GlcNAc...) asparagine). 3 N-linked (GlcNAc...) asparagine glycosylation sites follow: N266, N299, and N340. Cystine bridges form between C347–C391 and C434–C492. N-linked (GlcNAc...) asparagine glycosylation is present at N500. The cysteines at positions 532 and 576 are disulfide-linked. N-linked (GlcNAc...) asparagine glycosylation is present at N583. A disulfide bond links C625 and C685. N693, N722, and N737 each carry an N-linked (GlcNAc...) asparagine glycan. 2 disulfides stabilise this stretch: C725–C770 and C813–C872. The short motif at 827 to 829 (RGD) is the Cell attachment site element. Residue N882 is glycosylated (N-linked (GlcNAc...) asparagine). Intrachain disulfides connect C912–C956 and C1001–C1063. 2 N-linked (GlcNAc...) asparagine glycosylation sites follow: N1090 and N1100. 2 cysteine pairs are disulfide-bonded: C1103/C1145 and C1189/C1237. The N-linked (GlcNAc...) asparagine glycan is linked to N1247. Disulfide bonds link C1277/C1320 and C1363/C1422. Residues N1460 and N1474 are each glycosylated (N-linked (GlcNAc...) asparagine). 2 disulfide bridges follow: C1463–C1509 and C1552–C1611. Residues 1640–1660 (LLWVLGFLAGFLCLLLGLVAY) form a helical membrane-spanning segment. Over 1661–1695 (HTWRKKSSTKLNEDENSAEMATKKNTIQEEVVAAL) the chain is Cytoplasmic.

This sequence belongs to the immunoglobulin superfamily. SIGLEC (sialic acid binding Ig-like lectin) family. In terms of assembly, interacts with CLEC10A. Detected in lymph node in the subcapsular sinus, interfollicular regions, and T and B-cell boundary (at protein level). Expressed by macrophages in various tissues. Highest expression in spleen and lymph node with lower amounts in lung, liver, bone marrow, heart and skin. No expression in thymus, kidney, brain or small intestine.

The protein localises to the cell membrane. It localises to the secreted. Its function is as follows. Macrophage-restricted adhesion molecule that mediates sialic-acid dependent binding to lymphocytes, including granulocytes, monocytes, natural killer cells, B-cells and CD8 T-cells. Plays a crucial role in limiting bacterial dissemination by engaging sialylated bacteria to promote effective phagocytosis and antigen presentation for the adaptive immune response. Mediates the uptake of various enveloped viruses via sialic acid recognition and subsequently induces the formation of intracellular compartments filled with virions (VCCs). In turn, enhances macrophage-to-T-cell transmission of several viruses including murine leukemia virus. Acts as an endocytic receptor mediating clathrin dependent endocytosis. Preferentially binds to alpha-2,3-linked sialic acid. Binds to SPN/CD43 on T-cells. May play a role in hemopoiesis. Plays a role in the inhibition of antiviral innate immune by promoting TBK1 degradation via TYROBP and TRIM27-mediated ubiquitination. The protein is Sialoadhesin (Siglec1) of Mus musculus (Mouse).